A 147-amino-acid polypeptide reads, in one-letter code: 18 kDa antigen 1 (147 aa).

Positions 21 to 131 (TPTRPAVMPM…RPRKIAVGAA (111 aa)) constitute a sHSP domain.

Belongs to the small heat shock protein (HSP20) family.

Not known. This protein is one of the major immune reactive proteins in mycobacteria. The chain is 18 kDa antigen 1 from Mycobacterium avium.